The sequence spans 122 residues: Large ribosomal subunit protein uL14 (122 aa).

It belongs to the universal ribosomal protein uL14 family. In terms of assembly, part of the 50S ribosomal subunit. Forms a cluster with proteins L3 and L19. In the 70S ribosome, L14 and L19 interact and together make contacts with the 16S rRNA in bridges B5 and B8.

Binds to 23S rRNA. Forms part of two intersubunit bridges in the 70S ribosome. The protein is Large ribosomal subunit protein uL14 of Herminiimonas arsenicoxydans.